The chain runs to 208 residues: Uracil phosphoribosyltransferase (208 aa).

Residues arginine 78, arginine 103, and 130 to 138 (DPMLATANS) each bind 5-phospho-alpha-D-ribose 1-diphosphate. Uracil is bound by residues isoleucine 193 and 198–200 (GDA). Aspartate 199 provides a ligand contact to 5-phospho-alpha-D-ribose 1-diphosphate.

It belongs to the UPRTase family. Mg(2+) is required as a cofactor.

The catalysed reaction is UMP + diphosphate = 5-phospho-alpha-D-ribose 1-diphosphate + uracil. It functions in the pathway pyrimidine metabolism; UMP biosynthesis via salvage pathway; UMP from uracil: step 1/1. Its activity is regulated as follows. Allosterically activated by GTP. Functionally, catalyzes the conversion of uracil and 5-phospho-alpha-D-ribose 1-diphosphate (PRPP) to UMP and diphosphate. The sequence is that of Uracil phosphoribosyltransferase from Brucella ovis (strain ATCC 25840 / 63/290 / NCTC 10512).